Reading from the N-terminus, the 130-residue chain is Large ribosomal subunit protein bL20 (130 aa).

It belongs to the bacterial ribosomal protein bL20 family.

Binds directly to 23S ribosomal RNA and is necessary for the in vitro assembly process of the 50S ribosomal subunit. It is not involved in the protein synthesizing functions of that subunit. The sequence is that of Large ribosomal subunit protein bL20 from Salinispora tropica (strain ATCC BAA-916 / DSM 44818 / JCM 13857 / NBRC 105044 / CNB-440).